We begin with the raw amino-acid sequence, 119 residues long: MPPHIFIAFCILECFVETLSGNSKLGILGRSNVNSSAINGGAWSALESGIDESVARGSSTGIFTIWKIFSLLKAIEINYVFPLVYLFCVVFQFLSLGCYLSIFFRKTKSEEAKKRTSLY.

Residues 80 to 104 (VFPLVYLFCVVFQFLSLGCYLSIFF) traverse the membrane as a helical segment.

The protein resides in the membrane. This is an uncharacterized protein from Saccharomyces cerevisiae (strain ATCC 204508 / S288c) (Baker's yeast).